A 286-amino-acid polypeptide reads, in one-letter code: Plasma membrane ascorbate-dependent reductase CYBRD1 (286 aa).

Topologically, residues 1 to 7 are cytoplasmic; sequence MAMEGYR. A helical transmembrane segment spans residues 8–32; sequence GFLGLLVSALLVGFLSVIFVLIWVL. A Cytochrome b561 domain is found at 15-220; that stretch reads SALLVGFLSV…FGALIFWIVT (206 aa). Over 33 to 47 the chain is Extracellular; it reads HFREGLGWDGGALEF. Residues 48–69 form a helical membrane-spanning segment; sequence NWHPVLAVTGFVFIQGIAIIVY. His50, Arg70, and Lys79 together coordinate heme b. Topologically, residues 70-78 are cytoplasmic; sequence RLPWTWKCS. 2 residues coordinate L-ascorbate: Lys79 and Lys83. Residues 79–105 traverse the membrane as a helical segment; that stretch reads KFLMKSIHAGLNAVAAILAIISVVAVF. Residue His86 participates in heme b binding. Over 106 to 118 the chain is Extracellular; the sequence is DYHNVRKIPHMYS. His108 contributes to the Fe(3+) binding site. Residues 115-118 and His120 contribute to the heme b site; that span reads HMYS. The chain crosses the membrane as a helical span at residues 119 to 144; it reads LHSWVGLTVLILYIQQLVVGFFIFLL. Residues 145–151 are Cytoplasmic-facing; that stretch reads PWAPPSL. Arg152 lines the L-ascorbate pocket. A helical membrane pass occupies residues 152-179; it reads RAIVMPIHVYSGLLLFGTVIATVLMGVT. Positions 159 and 180 each coordinate heme b. At 180–197 the chain is on the extracellular side; it reads EKLFFVLKNPSYHSFPPE. The helical transmembrane segment at 198-222 threads the bilayer; that stretch reads GVFTNTLGLLILVFGALIFWIVTRP. Over 223-286 the chain is Cytoplasmic; that stretch reads QWKRPREPGS…LVDTGQRSTM (64 aa). Lys225 contacts heme b. At Ser232 the chain carries Phosphoserine. Thr285 is subject to Phosphothreonine.

In terms of assembly, homodimer. Heme b is required as a cofactor. Highly expressed in all regions of the small intestine and colon studied in suckling animals. However, after weaning, when iron absorption declines significantly, strong expression is retained only in the duodenum. Also expressed in respiratory epithelium.

It localises to the cell membrane. Its subcellular location is the apical cell membrane. The catalysed reaction is Fe(3+)(out) + L-ascorbate(in) = monodehydro-L-ascorbate radical(in) + Fe(2+)(out) + H(+). The enzyme catalyses Cu(2+)(out) + L-ascorbate(in) = Cu(+)(out) + monodehydro-L-ascorbate radical(in) + H(+). It catalyses the reaction monodehydro-L-ascorbate radical(out) + L-ascorbate(in) = monodehydro-L-ascorbate radical(in) + L-ascorbate(out). Functionally, plasma membrane reductase that uses cytoplasmic ascorbate as an electron donor to reduce extracellular Fe(3+) into Fe(2+). Probably functions in dietary iron absorption at the brush border of duodenal enterocytes by producing Fe(2+), the divalent form of iron that can be transported into enterocytes. It is also able to reduce extracellular monodehydro-L-ascorbate and may be involved in extracellular ascorbate regeneration by erythrocytes in blood. May also act as a ferrireductase in airway epithelial cells. May also function as a cupric transmembrane reductase. The protein is Plasma membrane ascorbate-dependent reductase CYBRD1 of Rattus norvegicus (Rat).